Here is a 365-residue protein sequence, read N- to C-terminus: uncharacterized protein (365 aa).

2 disordered regions span residues 218-262 (QRPS…AEAA) and 315-342 (PRLP…RTPC). Composition is skewed to basic and acidic residues over residues 239–257 (PDNR…KDPE) and 331–341 (MEFRNLSDRTP).

This is an uncharacterized protein from Mus musculus (Mouse).